A 392-amino-acid polypeptide reads, in one-letter code: Autophagy-related protein 21 (392 aa).

2 WD repeats span residues V200–P240 and S250–D289. Residues F246–S250 carry the L/FRRG motif motif.

Belongs to the WD repeat PROPPIN family.

Its subcellular location is the cytoplasm. The protein localises to the membrane. It is found in the vacuole membrane. Required for cytoplasm to vacuole transport (Cvt) vesicles formation and mitophagy. Involved in binding of phosphatidylethanolamine to ATG8 and in recruitment of ATG8 and ATG5 to the pre-autophagosomal structure. Protects ATG8 from ARG4-mediated cleavage. The protein is Autophagy-related protein 21 (ATG21) of Kluyveromyces lactis (strain ATCC 8585 / CBS 2359 / DSM 70799 / NBRC 1267 / NRRL Y-1140 / WM37) (Yeast).